The sequence spans 157 residues: Small ribosomal subunit protein uS7 (157 aa).

This sequence belongs to the universal ribosomal protein uS7 family. Part of the 30S ribosomal subunit. Contacts proteins S9 and S11.

Its function is as follows. One of the primary rRNA binding proteins, it binds directly to 16S rRNA where it nucleates assembly of the head domain of the 30S subunit. Is located at the subunit interface close to the decoding center, probably blocks exit of the E-site tRNA. This Roseiflexus castenholzii (strain DSM 13941 / HLO8) protein is Small ribosomal subunit protein uS7.